We begin with the raw amino-acid sequence, 557 residues long: Membrane protein insertase YidC (557 aa).

3 helical membrane passes run 371–391 (WGWSIILLTILIKLVFFPLSA), 437–457 (LGGCLPVVIQIPVFISLYWVL), and 515–535 (PIVFSVMFFFFPAGLVLYWVV).

It belongs to the OXA1/ALB3/YidC family. Type 1 subfamily. As to quaternary structure, interacts with the Sec translocase complex via SecD. Specifically interacts with transmembrane segments of nascent integral membrane proteins during membrane integration.

It is found in the cell inner membrane. In terms of biological role, required for the insertion and/or proper folding and/or complex formation of integral membrane proteins into the membrane. Involved in integration of membrane proteins that insert both dependently and independently of the Sec translocase complex, as well as at least some lipoproteins. Aids folding of multispanning membrane proteins. This chain is Membrane protein insertase YidC, found in Polynucleobacter necessarius subsp. necessarius (strain STIR1).